The primary structure comprises 446 residues: Phosphoglucosamine mutase (446 aa).

S103 functions as the Phosphoserine intermediate in the catalytic mechanism. S103, D242, D244, and D246 together coordinate Mg(2+). At S103 the chain carries Phosphoserine.

It belongs to the phosphohexose mutase family. Mg(2+) is required as a cofactor. Activated by phosphorylation.

The enzyme catalyses alpha-D-glucosamine 1-phosphate = D-glucosamine 6-phosphate. In terms of biological role, catalyzes the conversion of glucosamine-6-phosphate to glucosamine-1-phosphate. The protein is Phosphoglucosamine mutase of Vibrio vulnificus (strain CMCP6).